The following is a 166-amino-acid chain: Disulfide bond formation protein B (166 aa).

The Cytoplasmic portion of the chain corresponds to 1–10; it reads MGLNITNRQG. Residues 11–27 traverse the membrane as a helical segment; that stretch reads FLLVAAACAGAIGFALF. At 28–45 the chain is on the periplasmic side; it reads AQYQLGEEPCPLCILQRI. Residues C37 and C40 are joined by a disulfide bond. Residues 46–62 form a helical membrane-spanning segment; sequence GVMAVGALALLAALHNP. The Cytoplasmic segment spans residues 63–69; that stretch reads GKTGAKV. The chain crosses the membrane as a helical span at residues 70-86; it reads WGGLMTLAALSGAGVSL. Residues 87–143 lie on the Periplasmic side of the membrane; that stretch reads RQLWLQSLPADQVPQCGPGLEFLMESFPLWEVLSKVLKGSGECAAIQGRFLGMTMPF. C102 and C129 are joined by a disulfide. A helical membrane pass occupies residues 144–162; sequence WVAVFFAGVIVWTLWLVGR. Over 163 to 166 the chain is Cytoplasmic; the sequence is RRRG.

Belongs to the DsbB family.

The protein resides in the cell inner membrane. Required for disulfide bond formation in some periplasmic proteins. Acts by oxidizing the DsbA protein. In Chromobacterium violaceum (strain ATCC 12472 / DSM 30191 / JCM 1249 / CCUG 213 / NBRC 12614 / NCIMB 9131 / NCTC 9757 / MK), this protein is Disulfide bond formation protein B.